Reading from the N-terminus, the 72-residue chain is Large ribosomal subunit protein bL31 (72 aa).

Zn(2+) is bound by residues Cys-16, Cys-18, Cys-38, and Cys-41.

The protein belongs to the bacterial ribosomal protein bL31 family. Type A subfamily. As to quaternary structure, part of the 50S ribosomal subunit. Zn(2+) serves as cofactor.

Its function is as follows. Binds the 23S rRNA. The protein is Large ribosomal subunit protein bL31 of Beutenbergia cavernae (strain ATCC BAA-8 / DSM 12333 / CCUG 43141 / JCM 11478 / NBRC 16432 / NCIMB 13614 / HKI 0122).